The chain runs to 65 residues: uncharacterized protein (65 aa).

The next 2 membrane-spanning stretches (helical) occupy residues 12–31 (IVKWLIFTILLVASISLIVV) and 41–63 (LVARATPLAIVVGLSAIAAAIIV).

The protein resides in the cell membrane. This is an uncharacterized protein from Halalkalibacterium halodurans (strain ATCC BAA-125 / DSM 18197 / FERM 7344 / JCM 9153 / C-125) (Bacillus halodurans).